A 44-amino-acid chain; its full sequence is MSDKPDMAEIEKFDKSKLKKTETQEKNPLPSKETIEQEKQAGES.

Positions Met-1–Glu-25 are enriched in basic and acidic residues. Residues Met-1–Ser-44 form a disordered region. The residue at position 2 (Ser-2) is an N-acetylserine. Ser-2 carries the phosphoserine modification. Position 4 is an N6-acetyllysine (Lys-4). The residue at position 12 (Lys-12) is an N6-acetyllysine; alternate. A Glycyl lysine isopeptide (Lys-Gly) (interchain with G-Cter in SUMO2); alternate cross-link involves residue Lys-12. Thr-23 is modified (phosphothreonine). Position 26 is an N6-acetyllysine (Lys-26). The residue at position 31 (Ser-31) is a Phosphoserine. Lys-32 carries the post-translational modification N6-acetyllysine. The span at Glu-33 to Ser-44 shows a compositional bias: basic and acidic residues. Thr-34 is subject to Phosphothreonine. Lys-39 is modified (N6-acetyllysine).

Belongs to the thymosin beta family. Identified in a complex composed of ACTA1, COBL, GSN AND TMSB4X. Interacts with SERPINB1. Post-translationally, acSDKP is inactivated by ACE, which removes the dipeptide Lys-Pro from its C-terminus.

The protein localises to the cytoplasm. It is found in the cytoskeleton. In terms of biological role, plays an important role in the organization of the cytoskeleton. Binds to and sequesters actin monomers (G actin) and therefore inhibits actin polymerization. Its function is as follows. Potent inhibitor of bone marrow derived stem cell differentiation. Acts by inhibits the entry of hematopoietic pluripotent stem cells into the S-phase. The protein is Thymosin beta-4 (TMSB4) of Bos taurus (Bovine).